Consider the following 279-residue polypeptide: Octanoyl-[GcvH]:protein N-octanoyltransferase (279 aa).

Positions 48 to 253 (ETSPPVIRLW…TLEKLSDEIV (206 aa)) constitute a BPL/LPL catalytic domain. The active-site Acyl-thioester intermediate is C152.

Belongs to the octanoyltransferase LipL family.

It carries out the reaction N(6)-octanoyl-L-lysyl-[glycine-cleavage complex H protein] + L-lysyl-[lipoyl-carrier protein] = N(6)-octanoyl-L-lysyl-[lipoyl-carrier protein] + L-lysyl-[glycine-cleavage complex H protein]. It functions in the pathway protein modification; protein lipoylation via endogenous pathway; protein N(6)-(lipoyl)lysine from octanoyl-[acyl-carrier-protein]. Functionally, catalyzes the amidotransfer (transamidation) of the octanoyl moiety from octanoyl-GcvH to the lipoyl domain of the E2 subunit of lipoate-dependent enzymes. The sequence is that of Octanoyl-[GcvH]:protein N-octanoyltransferase from Oceanobacillus iheyensis (strain DSM 14371 / CIP 107618 / JCM 11309 / KCTC 3954 / HTE831).